We begin with the raw amino-acid sequence, 525 residues long: uncharacterized protein (525 aa).

The first 21 residues, 1–21, serve as a signal peptide directing secretion; the sequence is MLECLSALLVLFAGGGGSVLA. Residues 22–448 lie on the Extracellular side of the membrane; it reads AVQSKTVADP…ISAASQLDKR (427 aa). The interval 242 to 264 is disordered; that stretch reads KVSSENCSKDTDDKSGSKKERNT. Residues 449-469 traverse the membrane as a helical segment; the sequence is IFIFTAITVSITTLMMLGFSY. The Cytoplasmic portion of the chain corresponds to 470 to 525; sequence RSRVSFRDHSIDDSDDDNDWSDDEVEFDEEYFYSLPVSIPEKGISLDKMAQQLGVE.

It is found in the membrane. This is an uncharacterized protein from Saccharomyces cerevisiae (strain YJM789) (Baker's yeast).